Here is a 151-residue protein sequence, read N- to C-terminus: MEGGVDARFYAILVTSGAEVNVATIIAERARALGLDIRSIIVPPRIKGYVILEAHDPGDVYDATRGLRHVKRRRPLILKFEEVMKLVKPEVEIPALKPGQVVEIVAGAFKGMKARVIDVNQSKGQVTVSLLEPLFRATATIPIDEVRPVEE.

One can recognise a KOW domain in the interval 98–128 (PGQVVEIVAGAFKGMKARVIDVNQSKGQVTV).

It belongs to the archaeal Spt5 family. As to quaternary structure, heterodimer composed of Spt4 and Spt5. Interacts with RNA polymerase (RNAP).

Its function is as follows. Stimulates transcription elongation. The sequence is that of Transcription elongation factor Spt5 from Aeropyrum pernix (strain ATCC 700893 / DSM 11879 / JCM 9820 / NBRC 100138 / K1).